The following is a 396-amino-acid chain: 1-deoxy-D-xylulose 5-phosphate reductoisomerase (396 aa).

Positions 17, 18, 19, 20, 47, and 130 each coordinate NADPH. K131 serves as a coordination point for 1-deoxy-D-xylulose 5-phosphate. E132 provides a ligand contact to NADPH. D156 serves as a coordination point for Mn(2+). Residues S157, E158, S182, and H205 each contribute to the 1-deoxy-D-xylulose 5-phosphate site. E158 is a binding site for Mn(2+). G211 is an NADPH binding site. 4 residues coordinate 1-deoxy-D-xylulose 5-phosphate: S218, N223, K224, and E227. Mn(2+) is bound at residue E227.

This sequence belongs to the DXR family. Requires Mg(2+) as cofactor. Mn(2+) serves as cofactor.

The enzyme catalyses 2-C-methyl-D-erythritol 4-phosphate + NADP(+) = 1-deoxy-D-xylulose 5-phosphate + NADPH + H(+). It functions in the pathway isoprenoid biosynthesis; isopentenyl diphosphate biosynthesis via DXP pathway; isopentenyl diphosphate from 1-deoxy-D-xylulose 5-phosphate: step 1/6. Catalyzes the NADPH-dependent rearrangement and reduction of 1-deoxy-D-xylulose-5-phosphate (DXP) to 2-C-methyl-D-erythritol 4-phosphate (MEP). The polypeptide is 1-deoxy-D-xylulose 5-phosphate reductoisomerase (Rhizobium etli (strain ATCC 51251 / DSM 11541 / JCM 21823 / NBRC 15573 / CFN 42)).